A 548-amino-acid chain; its full sequence is Glucose-6-phosphate isomerase (548 aa).

Glutamate 355 (proton donor) is an active-site residue. Catalysis depends on residues histidine 386 and lysine 514.

Belongs to the GPI family.

The protein localises to the cytoplasm. The enzyme catalyses alpha-D-glucose 6-phosphate = beta-D-fructose 6-phosphate. It participates in carbohydrate biosynthesis; gluconeogenesis. It functions in the pathway carbohydrate degradation; glycolysis; D-glyceraldehyde 3-phosphate and glycerone phosphate from D-glucose: step 2/4. Catalyzes the reversible isomerization of glucose-6-phosphate to fructose-6-phosphate. In Hamiltonella defensa subsp. Acyrthosiphon pisum (strain 5AT), this protein is Glucose-6-phosphate isomerase.